The following is a 373-amino-acid chain: T-protein (373 aa).

The Chorismate mutase domain occupies 1–90 (MVAELTALRD…ESYTSENDKG (90 aa)). The Prephenate/arogenate dehydrogenase domain maps to 99–361 (RPVVIVGGKG…DHAKRFLVES (263 aa)).

In the C-terminal section; belongs to the prephenate/arogenate dehydrogenase family.

It localises to the cytoplasm. The enzyme catalyses chorismate = prephenate. It catalyses the reaction prephenate + NAD(+) = 3-(4-hydroxyphenyl)pyruvate + CO2 + NADH. Its pathway is amino-acid biosynthesis; L-tyrosine biosynthesis; (4-hydroxyphenyl)pyruvate from prephenate (NAD(+) route): step 1/1. It participates in metabolic intermediate biosynthesis; prephenate biosynthesis; prephenate from chorismate: step 1/1. The polypeptide is T-protein (tyrA) (Enterobacter agglomerans (Erwinia herbicola)).